Reading from the N-terminus, the 441-residue chain is uncharacterized protein (441 aa).

An N-terminal signal peptide occupies residues 1 to 23 (MSRKYLLSLLLVGALVISVVASG). Residue Cys24 is modified to N-acetylcysteine. Cys24 is lipidated: S-archaeol cysteine.

It belongs to the bacterial solute-binding protein 1 family.

The protein resides in the cell membrane. Functionally, probably part of a binding-protein-dependent transport system PH1214/15/16. This is an uncharacterized protein from Pyrococcus horikoshii (strain ATCC 700860 / DSM 12428 / JCM 9974 / NBRC 100139 / OT-3).